The sequence spans 420 residues: Glucose-1-phosphate adenylyltransferase 2 (420 aa).

Alpha-D-glucose 1-phosphate is bound by residues tyrosine 109, glycine 175, 190 to 191 (EK), and serine 208.

This sequence belongs to the bacterial/plant glucose-1-phosphate adenylyltransferase family. Homotetramer.

The enzyme catalyses alpha-D-glucose 1-phosphate + ATP + H(+) = ADP-alpha-D-glucose + diphosphate. Its pathway is glycan biosynthesis; glycogen biosynthesis. Its function is as follows. Involved in the biosynthesis of ADP-glucose, a building block required for the elongation reactions to produce glycogen. Catalyzes the reaction between ATP and alpha-D-glucose 1-phosphate (G1P) to produce pyrophosphate and ADP-Glc. This chain is Glucose-1-phosphate adenylyltransferase 2, found in Pseudoalteromonas atlantica (strain T6c / ATCC BAA-1087).